A 317-amino-acid polypeptide reads, in one-letter code: Melanocyte-stimulating hormone receptor (317 aa).

Over 1–37 (MPMQGAQRRLLGSLNSTPTATPNLGLAANHTGAPCLE) the chain is Extracellular. Asn29 carries N-linked (GlcNAc...) asparagine glycosylation. The chain crosses the membrane as a helical span at residues 38–63 (VSIPHGLFLSLGLVSLVENVLVVAAI). The Cytoplasmic portion of the chain corresponds to 64–72 (AKNRNLHSP). Residues 73 to 93 (MYCFICCLALSDLLVSGSNML) form a helical membrane-spanning segment. Residues 94-118 (ETAVILLLEAGALATRASVVQQLQN) are Extracellular-facing. A helical membrane pass occupies residues 119-140 (TIDVLTCSSMLCSLCFLGAIAV). Residues 141 to 163 (DRYVSIFYALRYHSIVTLPRARR) are Cytoplasmic-facing. A helical membrane pass occupies residues 164–183 (AIAAIWVASVLSSTLFIAYC). Topologically, residues 184–191 (DHAAVLLC) are extracellular. A helical membrane pass occupies residues 192 to 211 (LVVFFLAMLVLMAVLYVHML). Topologically, residues 212–240 (ARACQHAQGITRLHKRQLPAHQGFGLRGA) are cytoplasmic. Residues 241–266 (ATLTILLGIFFLCWGPFFLHLMLVVL) traverse the membrane as a helical segment. Topologically, residues 267–279 (CPQHLTCSCIFKN) are extracellular. The helical transmembrane segment at 280-300 (FKVFLTLIICNTIIDPLIYAF) threads the bilayer. Residues 301–317 (RSQELCRTLKEVLLCSW) lie on the Cytoplasmic side of the membrane. Cys315 carries S-palmitoyl cysteine lipidation.

It belongs to the G-protein coupled receptor 1 family. In terms of assembly, interacts with MGRN1, but does not undergo MGRN1-mediated ubiquitination; this interaction competes with GNAS-binding and thus inhibits agonist-induced cAMP production. Interacts with OPN3; the interaction results in a decrease in MC1R-mediated cAMP signaling and ultimately a decrease in melanin production in melanocytes.

Its subcellular location is the cell membrane. Receptor for MSH (alpha, beta and gamma) and ACTH. The activity of this receptor is mediated by G proteins which activate adenylate cyclase. Mediates melanogenesis, the production of eumelanin (black/brown) and phaeomelanin (red/yellow), via regulation of cAMP signaling in melanocytes. This Alouatta caraya (Black howler monkey) protein is Melanocyte-stimulating hormone receptor (MC1R).